We begin with the raw amino-acid sequence, 257 residues long: Ribonuclease HII (257 aa).

Positions 72–257 (TYIAGIDEVG…FAPIKDMIQK (186 aa)) constitute an RNase H type-2 domain. A divalent metal cation-binding residues include Asp-78, Glu-79, and Asp-170.

Belongs to the RNase HII family. The cofactor is Mn(2+). Requires Mg(2+) as cofactor.

Its subcellular location is the cytoplasm. It carries out the reaction Endonucleolytic cleavage to 5'-phosphomonoester.. Endonuclease that specifically degrades the RNA of RNA-DNA hybrids. This is Ribonuclease HII from Bacillus thuringiensis (strain Al Hakam).